The sequence spans 110 residues: UPF0060 membrane protein Bpet0062 (110 aa).

Helical transmembrane passes span 7-27, 33-53, 63-83, and 86-106; these read LGLFALTAVAEIVGCYLPYLW, SAWLLVPAALSLAVFAWLLTL, AAYGGVYVSMALLWLWAVDGV, and ATTDWAGVGLCLAGMALIMAG.

Belongs to the UPF0060 family.

The protein localises to the cell inner membrane. This Bordetella petrii (strain ATCC BAA-461 / DSM 12804 / CCUG 43448) protein is UPF0060 membrane protein Bpet0062.